The following is a 903-amino-acid chain: MTTIHSRQMLQEHVSMEFSSSTTHVQTFSQTTKIVGEEVVRRKSSSIVEFFSLVTRSSNIPAGDSVPEFVEKPQPVTAPEGDKAVFRARVQGNAKPHISWKRESGIPIKESAKIFYDSINKEHVLKLEPLTSDDSDNYKCIASNDHADAIYTVSLLVTEGQEKMDFKKMLKKRAPPAPKKKQKKVANEKEMLEILSKVPKKDFEKVCMEYGFTDFRGLLRKLKEMKKKVEVEAIRILKPLEDKETKVDTTVVFDCIMELKDPNVKMIWIKGTEPLRIQYSLGKYDVKQMGTKYMLVISNVNMNDAGIYSLSVGDKRMSAELTVLDEPLKFLGEMKPVKVTERQTAVFEIRLSKKEPNFVWKFNGKELKRDDKYEITVSEDGLTHTLKIKDARLSDSGEFSAEAGNLVQKAQLTVDRIPIKFVSNLKNVRVKERSRACLECELTSKDVTLRWKKDGQLLMHGTKYSMNHEGKRAELIIEDAQLSDGGEYTVVAMQDGDPTEYYSTAIVTVEERLATVKSGMSDVHAATGSPAELCVVLNDEKVEGVWLKDGKEITDLPGMQIVKQGAVHKLIFPSMGPEHEGKYTFRAKGTESEASVFIADPPTIDPSVLEALAAHAITVKVGHTAHIKVPFRGKPLPKVTWYKDGMEVTEEERVSMERGEDQALLTISNCVREDSGLILLKLKNDHGSATATLHLSVLEPPGFASQPQVTDVTKEAVTITWNAPTQDGGAPVLGYIVERRKKGSNLWVPVNKDPIQGTKCTVDGLLEDTEYEFRVIAVNKAGPGQPSVPSSSVVAKDPVKPPGLVQDLHVSDSSNSSISLAWREPAEGDPPSGYILEMRAEDTKEWSKCTKIPISGTCYTVGGLIERQKYFFRIRAVNEAGVGEPVELDKGVRAMPPPGLTTT.

4 consecutive Ig-like domains span residues 67-158 (PEFV…LLVT), 232-322 (EAIR…AELT), 418-508 (PIKF…AIVT), and 606-696 (PSVL…LHLS). 2 consecutive Fibronectin type-III domains span residues 703–798 (FASQ…AKDP) and 804–898 (LVQD…MPPP).

The protein is Immunoglobulin superfamily member 22 (IGSF22) of Homo sapiens (Human).